Reading from the N-terminus, the 87-residue chain is MAHKKGQGSVKNGRDSRSKRLGVKKFGGQEVIAGNIIIRQRGTKWHPGKGVGMGRDYTIFSLVDGRVFFDREGRRVNVAPEGSEAAN.

The disordered stretch occupies residues 1–22 (MAHKKGQGSVKNGRDSRSKRLG).

Belongs to the bacterial ribosomal protein bL27 family.

The protein is Large ribosomal subunit protein bL27 of Akkermansia muciniphila (strain ATCC BAA-835 / DSM 22959 / JCM 33894 / BCRC 81048 / CCUG 64013 / CIP 107961 / Muc).